Consider the following 226-residue polypeptide: Deoxyribose-phosphate aldolase (226 aa).

Asp-95 (proton donor/acceptor) is an active-site residue. Catalysis depends on Lys-157, which acts as the Schiff-base intermediate with acetaldehyde. Lys-186 (proton donor/acceptor) is an active-site residue.

It belongs to the DeoC/FbaB aldolase family. DeoC type 1 subfamily.

It is found in the cytoplasm. The catalysed reaction is 2-deoxy-D-ribose 5-phosphate = D-glyceraldehyde 3-phosphate + acetaldehyde. The protein operates within carbohydrate degradation; 2-deoxy-D-ribose 1-phosphate degradation; D-glyceraldehyde 3-phosphate and acetaldehyde from 2-deoxy-alpha-D-ribose 1-phosphate: step 2/2. With respect to regulation, partially inhibited by acetaldehyde. After incubation for 2, 4 and 6 hours in 300 mM acetaldehyde at 25 degrees Celsius, retains approximately 61.32%, 42.33% and 34.73% of the initial 2-deoxy-D-ribose-5-phosphate (DR5P) cleavage activity, respectively. In terms of biological role, catalyzes a reversible aldol reaction between acetaldehyde and D-glyceraldehyde 3-phosphate to generate 2-deoxy-D-ribose 5-phosphate. In vitro, DERA can catalyze the aldol condensation of chloroacetaldehyde (CHAD) and acetaldehyde (ACD), yielding (S)-4-chloro-3-hydroxybutanal ((S)-CHB), which can combine with another aldehyde to form (3R,5S)-6-chloro-2,4,6-trideoxyhexapyranose (CTeHP), a key intermediate for statin drugs. The sequence is that of Deoxyribose-phosphate aldolase from Pseudomonas syringae pv. syringae (strain B728a).